A 988-amino-acid chain; its full sequence is Transposase for transposon Tn501 (988 aa).

The protein belongs to the transposase 7 family.

In terms of biological role, required for transposition of transposon Tn501. This chain is Transposase for transposon Tn501 (tnpA), found in Pseudomonas aeruginosa.